Here is a 634-residue protein sequence, read N- to C-terminus: MSVETQKETLGFQTEVKQLLHLMIHSLYSNKEIFLRELISNASDAADKLRFEALAKPELLEGGAELKIRLSFDKDAKTVTLEDNGIGMSRDEVIAHLGTIAKSGTADFLKNLSGDQKKDSHLIGQFGVGFYSAFIVADKVDVFTRRAGLSAAEGVHWSSKGEGEFEVATVEKAERGTRIVLHLKSGEEEFADGWRLRNIVKKYSDHIALPIELPKEHYGEEKDKPAEVEWETVNRASALWTRPRAEVKDEEYQEFYKHVAHDFENPLTWSHNKVEGKLEYTSLLYVPGRAPFDLYHREAPKGLKLYVQRVFIMDQADEFLPLYLRFIKGVVDSNDLSLNVSREILQKDPVIDSMKSALTKRVLDMLEKLAKDKPEEYKAFWKAFGQVLKEGPAEDFANKEKIAGLLRFASTAGEGDEQSVSLADYLGRVKDGQDKIYYLTGESYAQIKNSPHLEVFRKKGIEVLLLTDRIDEWLMSYLTEFDGKQFVDVARGDLDLGKLDSEEDKKAQEEVAKAKEGLIERLKGALGEQVKEVRVSHRLTDSPAILAIGEQDLGLQMRQILEASGQKVPESKPIFEFNPSHPLIERLDAEADEDRFVDLTHILFDQAALAAGDSLKDPAAYVQRLNKLLVELSA.

An a; substrate-binding region spans residues 1-342; that stretch reads MSVETQKETL…SNDLSLNVSR (342 aa). The tract at residues 343–559 is b; it reads EILQKDPVID…EQDLGLQMRQ (217 aa). Residues 560-634 form a c region; that stretch reads ILEASGQKVP…LNKLLVELSA (75 aa).

This sequence belongs to the heat shock protein 90 family. In terms of assembly, homodimer.

It localises to the cytoplasm. Functionally, molecular chaperone. Has ATPase activity. This Ectopseudomonas mendocina (strain ymp) (Pseudomonas mendocina) protein is Chaperone protein HtpG.